Here is a 134-residue protein sequence, read N- to C-terminus: Outer membrane lipoprotein RcsF (134 aa).

The signal sequence occupies residues 1 to 15 (MRALPICLVALMLSG). Residue Cys-16 is the site of N-palmitoyl cysteine attachment. Residue Cys-16 is the site of S-diacylglycerol cysteine attachment. Disordered stretches follow at residues 22 to 48 (SPVE…RATP) and 67 to 88 (GEVS…IPTA). Residues 72–82 (DSCQASNQDSP) are compositionally biased toward polar residues. Disulfide bonds link Cys-74–Cys-118 and Cys-109–Cys-124.

This sequence belongs to the RcsF family.

Its subcellular location is the cell outer membrane. In terms of biological role, essential component of the Rcs signaling system, which controls transcription of numerous genes. Plays a role in signal transduction from the cell surface to the histidine kinase RcsC. May detect outer membrane defects. The chain is Outer membrane lipoprotein RcsF from Escherichia coli O6:H1 (strain CFT073 / ATCC 700928 / UPEC).